We begin with the raw amino-acid sequence, 185 residues long: Adenylate kinase (185 aa).

8–16 is an ATP binding site; that stretch reads GIPGSGSTT.

This sequence belongs to the archaeal adenylate kinase family.

It localises to the cytoplasm. The catalysed reaction is AMP + ATP = 2 ADP. In Methanothermobacter thermautotrophicus (strain ATCC 29096 / DSM 1053 / JCM 10044 / NBRC 100330 / Delta H) (Methanobacterium thermoautotrophicum), this protein is Adenylate kinase (adkA).